The sequence spans 344 residues: RNA 3'-terminal phosphate cyclase (344 aa).

ATP-binding positions include Q102 and 284 to 288 (FLGDQ). H308 functions as the Tele-AMP-histidine intermediate in the catalytic mechanism.

Belongs to the RNA 3'-terminal cyclase family. Type 1 subfamily.

It is found in the cytoplasm. The catalysed reaction is a 3'-end 3'-phospho-ribonucleotide-RNA + ATP = a 3'-end 2',3'-cyclophospho-ribonucleotide-RNA + AMP + diphosphate. In terms of biological role, catalyzes the conversion of 3'-phosphate to a 2',3'-cyclic phosphodiester at the end of RNA. The mechanism of action of the enzyme occurs in 3 steps: (A) adenylation of the enzyme by ATP; (B) transfer of adenylate to an RNA-N3'P to produce RNA-N3'PP5'A; (C) and attack of the adjacent 2'-hydroxyl on the 3'-phosphorus in the diester linkage to produce the cyclic end product. The biological role of this enzyme is unknown but it is likely to function in some aspects of cellular RNA processing. The polypeptide is RNA 3'-terminal phosphate cyclase (Thermococcus gammatolerans (strain DSM 15229 / JCM 11827 / EJ3)).